The primary structure comprises 268 residues: Ribosomal RNA small subunit methyltransferase A (268 aa).

S-adenosyl-L-methionine contacts are provided by Asn-11, Leu-13, Gly-37, Glu-58, Asp-86, and Asn-104.

The protein belongs to the class I-like SAM-binding methyltransferase superfamily. rRNA adenine N(6)-methyltransferase family. RsmA subfamily.

It is found in the cytoplasm. The catalysed reaction is adenosine(1518)/adenosine(1519) in 16S rRNA + 4 S-adenosyl-L-methionine = N(6)-dimethyladenosine(1518)/N(6)-dimethyladenosine(1519) in 16S rRNA + 4 S-adenosyl-L-homocysteine + 4 H(+). Its function is as follows. Specifically dimethylates two adjacent adenosines (A1518 and A1519) in the loop of a conserved hairpin near the 3'-end of 16S rRNA in the 30S particle. May play a critical role in biogenesis of 30S subunits. The sequence is that of Ribosomal RNA small subunit methyltransferase A from Campylobacter fetus subsp. fetus (strain 82-40).